The primary structure comprises 203 residues: Pyridoxal 5'-phosphate synthase subunit PdxT (203 aa).

52-54 (GES) provides a ligand contact to L-glutamine. The active-site Nucleophile is Cys-84. L-glutamine is bound by residues Arg-116 and 144 to 145 (IR). Active-site charge relay system residues include His-184 and Glu-186.

Belongs to the glutaminase PdxT/SNO family. In the presence of PdxS, forms a dodecamer of heterodimers. Only shows activity in the heterodimer.

It carries out the reaction aldehydo-D-ribose 5-phosphate + D-glyceraldehyde 3-phosphate + L-glutamine = pyridoxal 5'-phosphate + L-glutamate + phosphate + 3 H2O + H(+). The catalysed reaction is L-glutamine + H2O = L-glutamate + NH4(+). Its pathway is cofactor biosynthesis; pyridoxal 5'-phosphate biosynthesis. Functionally, catalyzes the hydrolysis of glutamine to glutamate and ammonia as part of the biosynthesis of pyridoxal 5'-phosphate. The resulting ammonia molecule is channeled to the active site of PdxS. The polypeptide is Pyridoxal 5'-phosphate synthase subunit PdxT (Aeropyrum pernix (strain ATCC 700893 / DSM 11879 / JCM 9820 / NBRC 100138 / K1)).